A 506-amino-acid polypeptide reads, in one-letter code: Histidine ammonia-lyase (506 aa).

Residues 144-146 (ASG) constitute a cross-link (5-imidazolinone (Ala-Gly)). At Ser145 the chain carries 2,3-didehydroalanine (Ser).

The protein belongs to the PAL/histidase family. Contains an active site 4-methylidene-imidazol-5-one (MIO), which is formed autocatalytically by cyclization and dehydration of residues Ala-Ser-Gly.

It localises to the cytoplasm. The catalysed reaction is L-histidine = trans-urocanate + NH4(+). Its pathway is amino-acid degradation; L-histidine degradation into L-glutamate; N-formimidoyl-L-glutamate from L-histidine: step 1/3. In Legionella pneumophila (strain Paris), this protein is Histidine ammonia-lyase.